The sequence spans 911 residues: MSPEGKEMRYRISDIARELQVSPQEVLHFVKEAGGKVASTSSMVKGPMRDLILDQFSDEKKLVDETRKIREEKQLRLSRLEEQSRKTYEKEQQLKDTISGRPERAAAKPRTEVPSESVEPEPVKEMPETVAEPEVTGVVSEPDENVAAVAEEVKSPVEETSETVAEKNDVEGQVSYEVPQKIGGLTVFGTLDVQSSLGMGGEADKKKQRKKRFKEQADELKDEFDIKAKEGGKEREAGGESRKPVKKGSEETKKTTVESTSAKKKKGKKKKKPEVDEKTIEKNIRSTISGMDDTSGSGSSRQKFRKMRKIEREKELEEAEAIKEAERSIIRVTEFATAHELADLMGILPKEIIQHCFTMGKFVTINQRLDKETIELVAMEFGFDAEFVSEVEATEVTEIEDEEEELEIRPPVVTIMGHVDHGKTSLLDYIRSSNVVAGESGGITQHIGAYEVSLDGDRKITFLDTPGHEAFTAMRARGAQVTDIVILVVSADDSVMPQTVEAINHSKAAGVPIVVAINKIDKPDANPEKIKTQLSEAGVLVEDWGGEYQCQEISAKQGTGIDALMEKVLTEAEIRELKANFSEDVPSRGIIVEAELDKGKGVVSTVLVQRGFLKVGDPFVAGHTMGKVRALMDERGKRIREAGPSQPVSVLGFEDLPQSGDLFTVMPSDREAREIAQKRQIIRREHEFRRSTRVKLDSIARQIKEGLMKELSVILKADTDGSIQALADGLMKIHNDEVKVQIIHQGVGQITETDVLLAAASDAIIIGFRVRPNVNAKRLAEKEDLDVRFYSVIYHVIEDIEQALEGMLSPELHEESIGSLEIRQVFKVPKIGNVAGCYMLEGKIFRDSKVRLLRDGVQIYDGVLDSLKRFKDDVKEVDAGYECGLNLKGYSDIKVGDIVEGYRIVEKKRKL.

Basic and acidic residues-rich tracts occupy residues 80–94 and 101–113; these read LEEQSRKTYEKEQQL and RPERAAAKPRTEV. Disordered regions lie at residues 80–142, 153–172, and 195–309; these read LEEQ…VSEP, VKSPVEETSETVAEKNDVEG, and SSLG…KMRK. Basic and acidic residues predominate over residues 214–256; that stretch reads KEQADELKDEFDIKAKEGGKEREAGGESRKPVKKGSEETKKTT. Basic residues predominate over residues 262–272; it reads AKKKKGKKKKK. Over residues 273 to 284 the composition is skewed to basic and acidic residues; sequence PEVDEKTIEKNI. The span at 286–300 shows a compositional bias: low complexity; sequence STISGMDDTSGSGSS. The tr-type G domain maps to 408–578; that stretch reads IRPPVVTIMG…LTEAEIRELK (171 aa). Positions 417 to 424 are G1; the sequence is GHVDHGKT. Position 417-424 (417-424) interacts with GTP; the sequence is GHVDHGKT. The G2 stretch occupies residues 442-446; it reads GITQH. Residues 464 to 467 are G3; the sequence is DTPG. GTP-binding positions include 464–468 and 518–521; these read DTPGH and NKID. The tract at residues 518 to 521 is G4; it reads NKID. A G5 region spans residues 554–556; the sequence is SAK.

It belongs to the TRAFAC class translation factor GTPase superfamily. Classic translation factor GTPase family. IF-2 subfamily.

It is found in the cytoplasm. In terms of biological role, one of the essential components for the initiation of protein synthesis. Protects formylmethionyl-tRNA from spontaneous hydrolysis and promotes its binding to the 30S ribosomal subunits. Also involved in the hydrolysis of GTP during the formation of the 70S ribosomal complex. The protein is Translation initiation factor IF-2 of Chlorobium phaeobacteroides (strain BS1).